The primary structure comprises 621 residues: UvrABC system protein C (621 aa).

The GIY-YIG domain maps to 13–92 (EKPGVYLMKN…IKKYRPRYNI (80 aa)). One can recognise a UVR domain in the interval 204–239 (NEVINDLKIKMEKASSELKFEEAASFRDKLLAVEKI).

The protein belongs to the UvrC family. In terms of assembly, interacts with UvrB in an incision complex.

The protein localises to the cytoplasm. The UvrABC repair system catalyzes the recognition and processing of DNA lesions. UvrC both incises the 5' and 3' sides of the lesion. The N-terminal half is responsible for the 3' incision and the C-terminal half is responsible for the 5' incision. The chain is UvrABC system protein C from Clostridium novyi (strain NT).